Reading from the N-terminus, the 271-residue chain is Tryptophan synthase alpha chain (271 aa).

Residues Glu-49 and Asp-60 each act as proton acceptor in the active site.

Belongs to the TrpA family. Tetramer of two alpha and two beta chains.

It catalyses the reaction (1S,2R)-1-C-(indol-3-yl)glycerol 3-phosphate + L-serine = D-glyceraldehyde 3-phosphate + L-tryptophan + H2O. It functions in the pathway amino-acid biosynthesis; L-tryptophan biosynthesis; L-tryptophan from chorismate: step 5/5. Functionally, the alpha subunit is responsible for the aldol cleavage of indoleglycerol phosphate to indole and glyceraldehyde 3-phosphate. The polypeptide is Tryptophan synthase alpha chain (Yersinia pestis bv. Antiqua (strain Angola)).